The primary structure comprises 498 residues: Glycerol kinase (498 aa).

Thr12 contacts ADP. 3 residues coordinate ATP: Thr12, Thr13, and Ser14. Thr12 contributes to the sn-glycerol 3-phosphate binding site. Arg16 is an ADP binding site. 4 residues coordinate sn-glycerol 3-phosphate: Arg82, Glu83, Tyr134, and Asp243. Positions 82, 83, 134, 243, and 244 each coordinate glycerol. The ADP site is built by Thr265 and Gly308. ATP is bound by residues Thr265, Gly308, Gln312, and Gly409. Positions 409 and 413 each coordinate ADP.

Belongs to the FGGY kinase family. As to quaternary structure, homotetramer and homodimer (in equilibrium).

It catalyses the reaction glycerol + ATP = sn-glycerol 3-phosphate + ADP + H(+). It participates in polyol metabolism; glycerol degradation via glycerol kinase pathway; sn-glycerol 3-phosphate from glycerol: step 1/1. Its activity is regulated as follows. Activated by phosphorylation and inhibited by fructose 1,6-bisphosphate (FBP). Key enzyme in the regulation of glycerol uptake and metabolism. Catalyzes the phosphorylation of glycerol to yield sn-glycerol 3-phosphate. This Clostridium botulinum (strain Loch Maree / Type A3) protein is Glycerol kinase.